Reading from the N-terminus, the 104-residue chain is UPF0473 protein LJ_0477 (104 aa).

It belongs to the UPF0473 family.

The chain is UPF0473 protein LJ_0477 from Lactobacillus johnsonii (strain CNCM I-12250 / La1 / NCC 533).